Here is an 85-residue protein sequence, read N- to C-terminus: UPF0386 protein Plav_1374 (85 aa).

The protein belongs to the UPF0386 family.

The sequence is that of UPF0386 protein Plav_1374 from Parvibaculum lavamentivorans (strain DS-1 / DSM 13023 / NCIMB 13966).